A 1588-amino-acid polypeptide reads, in one-letter code: Centrosomal protein of 170 kDa (1588 aa).

The 51-residue stretch at 23 to 73 folds into the FHA domain; sequence IFVGRDDCELMLQSRSVDKQHAVINYDASMDEHLVKDLGSLNGTFVNDVRI. 4 disordered regions span residues 121 to 172, 299 to 323, 338 to 447, and 461 to 508; these read LSQK…MPRG, KFTS…GIQT, QNNP…EEPS, and SGSL…NPNS. Ser141 is subject to Phosphoserine. The segment covering 155 to 164 has biased composition (basic and acidic residues); that stretch reads EALKSEEKPM. Basic and acidic residues predominate over residues 347 to 357; that stretch reads ERTEEDSKSIK. 2 positions are modified to phosphoserine: Ser355 and Ser358. Position 363 is a phosphotyrosine (Tyr363). A compositionally biased stretch (basic and acidic residues) spans 407 to 418; the sequence is KKKAQSTEKHQE. Ser443, Ser463, and Ser494 each carry phosphoserine. Position 498 is a phosphothreonine (Thr498). Phosphoserine is present on residues Ser568, Ser577, Ser628, and Ser631. Residues 602-854 form a disordered region; the sequence is ELSATVENET…PHINKQNSSV (253 aa). The segment covering 620–631 has biased composition (polar residues); the sequence is LRSTSCTTSLAS. The residue at position 639 (Thr639) is a Phosphothreonine. Basic and acidic residues predominate over residues 645 to 654; it reads NEEKLLESSR. Ser662 carries the phosphoserine modification. The segment covering 663–691 has biased composition (basic and acidic residues); sequence EIGEKQDTELQEKEAQVYQSEKHDADRGL. Ser718 is modified (phosphoserine). The span at 720 to 731 shows a compositional bias: basic and acidic residues; that stretch reads SKEKSETEKETS. At Thr752 the chain carries Phosphothreonine. 2 stretches are compositionally biased toward basic and acidic residues: residues 764–774 and 789–821; these read HIDKCREESSK and SKGD…KESS. Residues 822-839 show a composition bias toward polar residues; sequence KSLVRQGSFTIDKPSSNI. A phosphoserine mark is found at Ser829, Ser870, and Ser872. The segment at 844–1588 is targeting to microtubules; the sequence is IPHINKQNSS…GEEEDVTVHE (745 aa). The segment covering 899 to 908 has biased composition (basic and acidic residues); that stretch reads LREDNNKTDE. Disordered regions lie at residues 899-1222 and 1228-1247; these read LRED…RWRR and ASTS…HTRL. 2 positions are modified to phosphothreonine: Thr906 and Thr912. Residues 913–937 show a composition bias toward polar residues; it reads PSYNRDNSISPESDVDTASTISLVT. A phosphoserine mark is found at Ser922, Ser925, and Ser950. A compositionally biased stretch (basic and acidic residues) spans 967–980; that stretch reads DVTKSGSREKIEKK. A Phosphoserine modification is found at Ser1008. Thr1012 carries the phosphothreonine modification. Polar residues predominate over residues 1028–1038; that stretch reads IMSSDQETYSC. Residue Thr1047 is modified to Phosphothreonine. A Phosphoserine modification is found at Ser1048. A compositionally biased stretch (basic and acidic residues) spans 1049–1062; that stretch reads ADEHNIHSKLEGGK. Low complexity predominate over residues 1075-1093; that stretch reads STSKSTTLPRPRPTRTSLL. Residues Ser1102, Ser1104, Ser1122, Ser1123, Ser1135, Ser1150, and Ser1155 each carry the phosphoserine modification. Residues 1103-1588 are targeting to centrosomes; it reads DSELADADKA…GEEEDVTVHE (486 aa). Residues 1112–1128 are compositionally biased toward low complexity; that stretch reads ASVASEVSTTSSTSKPP. Residues 1158–1173 are compositionally biased toward low complexity; sequence EATISRSSASARTAEA. Ser1188, Ser1195, Ser1200, Ser1229, Ser1231, Ser1241, Ser1260, and Ser1270 each carry phosphoserine. Over residues 1191-1218 the composition is skewed to polar residues; sequence TRANSISRLSDSKVKSMSSTHGSPSVNS. The disordered stretch occupies residues 1315–1334; the sequence is SVTSSGTAPSTTVSTAATTP. Ser1362 is modified (phosphoserine). The tract at residues 1370 to 1398 is disordered; the sequence is PLVHSKTPEGNNGRSVDSRPQPAEHPDHL. The stretch at 1467 to 1495 forms a coiled coil; the sequence is KTSSMEISSILQELKRVEKQLQVINAMID. Residues 1511-1540 form a disordered region; the sequence is AILPSPPKQKSSPVNNHSSPSQTPALCPPE. The segment covering 1518-1534 has biased composition (polar residues); sequence KQKSSPVNNHSSPSQTP. Ser1521 and Ser1522 each carry phosphoserine.

It belongs to the CEP170 family. In terms of assembly, interacts with CCDC68 and CCDC120; leading to recruitment to centrosomes. Interacts with PLK1. Interacts with NIN. Interacts with FHDC1. Interacts with CCDC61. Interacts with TBK1; efficient complex formation may be dependent on the presence of CCDC61. Post-translationally, phosphorylated; probably by PLK1.

It is found in the cytoplasm. Its subcellular location is the cytoskeleton. It localises to the microtubule organizing center. The protein resides in the centrosome. The protein localises to the centriole. It is found in the spindle. Its function is as follows. Plays a role in microtubule organization. Required for centriole subdistal appendage assembly. This Mus musculus (Mouse) protein is Centrosomal protein of 170 kDa (Cep170).